The following is a 1320-amino-acid chain: MFGLDQFEPQVNSRNAGQGERNFNETGLSMNTHFKAPAFHTGGPPGPVDPAMSALGEPPILGMNMEPYGFHARGHSELHAGGLQAQPVHGFFGGQQPHHGHPGSHHPHQHHPHFGGNFGGPDPGASCLHGGRLLGYGGAAGGLGSQPPFAEGYEHMAESQGPESFGPQRPGNLPDFHSSGASSHAVPAPCLPLDQSPNRAASFHGLPSSSGSDSHSLEPRRVTNQGAVDSLEYNYPGEAPSGHFDMFSPSDSEGQLPHYAAGRQVPGGAFPGASAMPRAAGMVGLSKMHAQPPQQQPQQQQQPQQQQQQHGVFFERFSGARKMPVGLEPSVGSRHPLMQPPQQAPPPPQQQPPQQPPQQQPPPPPGLLVRQNSCPPALPRPQQGEAGTPSGGLQDGGPMLPSQHAQFEYPIHRLENRSMHPYSEPVFSMQHPPPQQAPNQRLQHFDAPPYMNVAKRPRFDFPGSAGVDRCASWNGSMHNGALDNHLSPSAYPGLPGEFTPPVPDSFPSGPPLQHPAPDHQSLQQQQQQQQQQQQQQQQQQQQQQQQQQQQRQNAALMIKQMASRNQQQRLRQPNLAQLGHPGDVGQGGLVHGGPVGGLAQPNFEREGGSTGAGRLGTFEQQAPHLAQESAWFSGPHPPPGDLLPRRMGGSGLPADCGPHDPSLAPPPPPGGSGVLFRGPLQEPMRMPGEGHVPALPSPGLQFGGSLGGLGQLQSPGAGVGLPSAASERRPPPPDFATSALGGQPGFPFGAAGRQSTPHSGPGVNSPPSAGGGGGSSGGGGGGGAYPPQPDFQPSQRTSASKLGALSLGSFNKPSSKDNLFGQSCLAALSTACQNMIASLGAPNLNVTFNKKNPPEGKRKLSQNETDGAAVAGNPGSDYFPGGTAPGAPGPGGPSGTSSSGSKASGPPNPPAQGDGTSLSPNYTLESTSGNDGKPVSGGGGRGRGRRKRDSGHVSPGTFFDKYSAAPDSGGAPGVSPGQQQASGAAVGGSSAGETRGAPTPHEKALTSPSWGKGAELLLGDQPDLIGSLDGGAKSDSSSPNVGEFASDEVSTSYANEDEVSSSSDNPQALVKASRSPLVTGSPKLPPRGVGAGEHGPKAPPPALGLGIMSNSTSTPDSYGGGGGPGHPGTPGLEQVRTPTSSSGAPPPDEIHPLEILQAQIQLQRQQFSISEDQPLGLKGGKKGECAVGASGAQNGDSELGSCCSEAVKSAMSTIDLDSLMAEHSAAWYMPADKALVDSADDDKTLAPWEKAKPQNPNSKEAHDLPANKASASQPGSHLQCLSVHCTDDVGDAKARASVPTWRSLHSDISNRFGTFVAALT.

Residue methionine 1 is modified to N-acetylmethionine. Disordered regions lie at residues 1 to 26 (MFGL…FNET), 92 to 121 (FGGQ…FGGP), 147 to 219 (PPFA…SLEP), 231 to 411 (LEYN…EYPI), 423 to 442 (SEPV…NQRL), 474 to 615 (NGSM…AGRL), 629 to 819 (SAWF…KDNL), 840 to 1150 (GAPN…PDEI), and 1247 to 1273 (PWEK…SASQ). Residues 98 to 113 (HHGHPGSHHPHQHHPH) are compositionally biased toward basic residues. 2 stretches are compositionally biased toward low complexity: residues 202-214 (SFHG…GSDS) and 291-309 (QPPQ…QQQQ). Residues 338 to 366 (MQPPQQAPPPPQQQPPQQPPQQQPPPPPG) show a composition bias toward pro residues. Pro residues predominate over residues 498-514 (FTPPVPDSFPSGPPLQH). Low complexity-rich tracts occupy residues 523–550 (QQQQ…QQQQ) and 564–578 (RNQQ…LAQL). Composition is skewed to gly residues over residues 582–596 (GDVG…GPVG) and 701–710 (QFGGSLGGLG). Residues 759–768 (SGPGVNSPPS) are compositionally biased toward low complexity. Residues 769 to 784 (AGGGGGSSGGGGGGGA) show a composition bias toward gly residues. Low complexity-rich tracts occupy residues 798–809 (SASKLGALSLGS) and 895–905 (GTSSSGSKASG). A compositionally biased stretch (polar residues) spans 914–930 (DGTSLSPNYTLESTSGN). A phosphoserine mark is found at serine 950 and serine 954. Over residues 973–984 (GVSPGQQQASGA) the composition is skewed to low complexity. Serine 1007 carries the phosphoserine modification. Residues 1048 to 1066 (EVSTSYANEDEVSSSSDNP) are compositionally biased toward polar residues. Position 1081 is a phosphoserine (serine 1081). A compositionally biased stretch (gly residues) spans 1118–1128 (YGGGGGPGHPG).

As to quaternary structure, interacts with PBX1, PKNOX1, ZBTB24, E2F7, RING1. In terms of tissue distribution, widely expressed in fetal and adult tissues. Highest expression is observed in fetal brain and skeletal muscle, and adult skeletal muscle.

It is found in the nucleus. Transcriptional activator which specifically regulates expression of TBX22 in the posterior region of the developing palate. Required during later stages of palate development for growth and medial fusion of the palatal shelves. Promotes maturation and normal function of calvarial osteoblasts, including expression of the osteoclastogenic cytokine TNFSF11/RANKL. Necessary for normal development of the membranous bones of the skull. May play a role in tumor suppression. In Homo sapiens (Human), this protein is Transcriptional activator MN1 (MN1).